A 489-amino-acid chain; its full sequence is GDP-fucose protein O-fucosyltransferase 4 (489 aa).

Residues 1–7 (MAARCTE) lie on the Cytoplasmic side of the membrane. Residues 8-24 (AVLAALGVLSVCSASSS) form a helical; Signal-anchor for type II membrane protein membrane-spanning segment. Residues 25–489 (GSEASGEAER…EIFMKRNKNL (465 aa)) are Lumenal-facing. Asn-162 carries N-linked (GlcNAc...) asparagine glycosylation. A disulfide bridge connects residues Cys-385 and Cys-388.

The protein belongs to the glycosyltransferase 10 family. As to expression, widely expressed. Expressed at slightly higher level in heart, kidney and lung.

It is found in the endoplasmic reticulum membrane. It carries out the reaction L-threonyl-[protein] + GDP-beta-L-fucose = 3-O-(alpha-L-fucosyl)-L-threonyl-[protein] + GDP + H(+). The enzyme catalyses L-seryl-[protein] + GDP-beta-L-fucose = 3-O-(alpha-L-fucosyl)-L-seryl-[protein] + GDP + H(+). Its pathway is protein modification; protein glycosylation. Protein O-fucosyltransferase that specifically catalyzes O-fucosylation of serine or threonine residues in EMI domains of target proteins, such as MMRN1, MMRN2 and EMID1. Attaches fucose through an O-glycosidic linkage. O-fucosylation of EMI domain-containing proteins may be required for facilitating protein folding and secretion. Also shows minor alpha-(1,3)-fucosyltransferase activity toward activity toward biantennary N-glycan acceptors. However, this was tested with a library of synthetic substrates and this activity is unsure in vivo. The protein is GDP-fucose protein O-fucosyltransferase 4 (Fut11) of Mus musculus (Mouse).